Here is a 684-residue protein sequence, read N- to C-terminus: Cleavage and polyadenylation specificity factor subunit 3 (684 aa).

Serine 2 bears the N-acetylserine mark. Residues histidine 71, histidine 73, aspartate 75, histidine 76, histidine 158, and aspartate 179 each contribute to the Zn(2+) site. The active-site Proton donor is histidine 396. Histidine 418 is a Zn(2+) binding site. Residues lysine 462, lysine 465, and lysine 545 each participate in a glycyl lysine isopeptide (Lys-Gly) (interchain with G-Cter in SUMO) cross-link. Serine 659 is modified (phosphoserine). Threonine 681 is subject to Phosphothreonine.

Belongs to the metallo-beta-lactamase superfamily. RNA-metabolizing metallo-beta-lactamase-like family. CPSF3 subfamily. Component of the cleavage and polyadenylation specificity factor (CPSF) complex, composed of CPSF1, CPSF2, CPSF3, CPSF4 and FIP1L1. Interacts with CPSF2, CSTF2 and SYMPK. Interacts with TUT1; the interaction is direct and mediates the recruitment of the CPSF complex on the 3'UTR of pre-mRNAs. Interacts with WDR33. Interacts with ZC3H3. Interacts with ISY1; this interaction is in an RNA independent manner. Interacts with the microprocessor complex subunits DGCR8 and DROSHA; this interaction is in an RNA dependent manner. Zn(2+) is required as a cofactor. Sumoylated on Lys-462, Lys-465 and Lys-545, preferentially by SUMO3.

It localises to the nucleus. In terms of biological role, component of the cleavage and polyadenylation specificity factor (CPSF) complex that plays a key role in pre-mRNA 3'-end formation, recognizing the AAUAAA signal sequence and interacting with poly(A) polymerase and other factors to bring about cleavage and poly(A) addition. Has endonuclease activity, and functions as an mRNA 3'-end-processing endonuclease. Also involved in the histone 3'-end pre-mRNA processing. U7 snRNP-dependent protein that induces both the 3' endoribonucleolytic cleavage of histone pre-mRNAs and acts as a 5' to 3' exonuclease for degrading the subsequent downstream cleavage product (DCP) of mature histone mRNAs. Cleavage occurs after the 5'-ACCCA-3' sequence in the histone pre-mRNA leaving a 3'hydroxyl group on the upstream fragment containing the stem loop (SL) and 5' phosphate on the downstream cleavage product (DCP) starting with CU nucleotides. The U7-dependent 5' to 3' exonuclease activity is processive and degrades the DCP RNA substrate even after complete removal of the U7-binding site. Binds to the downstream cleavage product (DCP) of histone pre-mRNAs and the cleaved DCP RNA substrate in a U7 snRNP dependent manner. Required for the selective processing of microRNAs (miRNAs) during embryonic stem cell differentiation via its interaction with ISY1. Required for entering/progressing through S-phase of the cell cycle. Required for the biogenesis of all miRNAs from the pri-miR-17-92 primary transcript except miR-92a. Only required for the biogenesis of miR-290 and miR-96 from the pri-miR-290-295 and pri-miR-96-183 primary transcripts, respectively. In Mus musculus (Mouse), this protein is Cleavage and polyadenylation specificity factor subunit 3 (Cpsf3).